We begin with the raw amino-acid sequence, 601 residues long: Glutamine--fructose-6-phosphate aminotransferase [isomerizing] (601 aa).

C2 serves as the catalytic Nucleophile; for GATase activity. Residues 2-218 (CGIVGYIGYD…DHEIVIVKKD (217 aa)) enclose the Glutamine amidotransferase type-2 domain. SIS domains are found at residues 284-423 (IIND…EHGR) and 453-591 (IATD…VDKP). K596 serves as the catalytic For Fru-6P isomerization activity.

As to quaternary structure, homodimer.

The protein resides in the cytoplasm. The catalysed reaction is D-fructose 6-phosphate + L-glutamine = D-glucosamine 6-phosphate + L-glutamate. Its function is as follows. Catalyzes the first step in hexosamine metabolism, converting fructose-6P into glucosamine-6P using glutamine as a nitrogen source. In Staphylococcus aureus (strain Mu50 / ATCC 700699), this protein is Glutamine--fructose-6-phosphate aminotransferase [isomerizing].